The following is a 333-amino-acid chain: MDSEAVSSDSHVAAAIATRRRSNSVSDDYSVQRTNDDATQCKYFATQKGYWKDEFISRFANSSSNVSEARRFPEISMGYWARTAAIEKYVRDFLNEFDGNAQVVSLGCGFDTLFWRLVSSGAKLVKYVEVDFSSVTSKKIRHILKPIGPNSVDLKKSFESDAVVSHHADLHAGNYHLIGADLRQANELDQKLATCQLSHDIPTIFIAECVLVYMSADSSTALLKQIVSQFKQPAFVNYEQFRTSDAFTKVMEQNLGDRGIQLHGLEMCESAEKQEERFRNAGFKEVKVMDMNQIFNNFLDQKEVSRIREIEMLDEMELLQQLFAHYCVVSARI.

S-adenosyl-L-methionine contacts are provided by residues Lys42, Arg82, Gly107, Asp131, 181-182 (DL), and Glu208.

The protein belongs to the methyltransferase superfamily. LCMT family.

The enzyme catalyses [phosphatase 2A protein]-C-terminal L-leucine + S-adenosyl-L-methionine = [phosphatase 2A protein]-C-terminal L-leucine methyl ester + S-adenosyl-L-homocysteine. Its function is as follows. Methylates the carboxyl group of the C-terminal leucine residue of protein phosphatase 2A catalytic subunits to form alpha-leucine ester residues. The polypeptide is Leucine carboxyl methyltransferase 1 (Caenorhabditis elegans).